We begin with the raw amino-acid sequence, 416 residues long: Tyrosine--tRNA ligase (416 aa).

Tyr-34 contributes to the L-tyrosine binding site. The 'HIGH' region motif lies at 39-48; it reads PTGDSLHIGH. L-tyrosine contacts are provided by Tyr-165 and Gln-169. The 'KMSKS' region motif lies at 227–231; the sequence is KFGKT. Lys-230 contributes to the ATP binding site. Positions 349–416 constitute an S4 RNA-binding domain; sequence KNIVEWLVDT…KKKYFLARVK (68 aa).

It belongs to the class-I aminoacyl-tRNA synthetase family. TyrS type 1 subfamily. As to quaternary structure, homodimer.

The protein resides in the cytoplasm. It catalyses the reaction tRNA(Tyr) + L-tyrosine + ATP = L-tyrosyl-tRNA(Tyr) + AMP + diphosphate + H(+). Functionally, catalyzes the attachment of tyrosine to tRNA(Tyr) in a two-step reaction: tyrosine is first activated by ATP to form Tyr-AMP and then transferred to the acceptor end of tRNA(Tyr). The chain is Tyrosine--tRNA ligase from Ligilactobacillus salivarius (strain UCC118) (Lactobacillus salivarius).